The chain runs to 128 residues: MAKLTKDELIEAFKEMTLIELSEFVKEFEEVFDVTAAAPVAVAAAGAAGGEAAAAEEKDEFDVVLEDAGAKKIGVIKAVRELVSGLGLKEAKELVEGAPKAILEGANKDDAEAAKAKLEEAGAKVTLK.

It belongs to the bacterial ribosomal protein bL12 family. Homodimer. Part of the ribosomal stalk of the 50S ribosomal subunit. Forms a multimeric L10(L12)X complex, where L10 forms an elongated spine to which 2 to 4 L12 dimers bind in a sequential fashion. Binds GTP-bound translation factors.

Its function is as follows. Forms part of the ribosomal stalk which helps the ribosome interact with GTP-bound translation factors. Is thus essential for accurate translation. In Corynebacterium glutamicum (strain R), this protein is Large ribosomal subunit protein bL12.